A 779-amino-acid chain; its full sequence is Transcriptional regulator QRICH1 (779 aa).

Position 1 is an N-acetylmethionine (Met1). Residues 6–48 form the CARD domain; sequence ENTISFEEYIRVKARSVPQHRMKEFLDSLASKGPEALQEFQQT. 2 disordered regions span residues 141 to 163 and 219 to 242; these read QGQA…PSPS and ALSP…TASV. Ser346 bears the Phosphoserine mark. Residues Lys354 and Lys359 each participate in a glycyl lysine isopeptide (Lys-Gly) (interchain with G-Cter in SUMO2) cross-link. A compositionally biased stretch (low complexity) spans 420 to 430; sequence QQQPQQQTPQE. The tract at residues 420-443 is disordered; it reads QQQPQQQTPQEQTPPPPQQQQQQQ. The residue at position 467 (Ser467) is a Phosphoserine.

It is found in the nucleus. Its subcellular location is the cytoplasm. The protein resides in the cell membrane. In terms of biological role, transcriptional regulator that acts as a mediator of the integrated stress response (ISR) through transcriptional control of protein homeostasis under conditions of ER stress. Controls the outcome of the unfolded protein response (UPR), an ER-stress response pathway that either promotes recovery of ER homeostasis and cell survival, or triggers the terminal UPR which elicits programmed cell death when ER stress is prolonged and unresolved. ER stress induces QRICH1 translation by a ribosome translation re-initiation mechanism in response to EIF2S1/eIF-2-alpha phosphorylation, and stress-induced QRICH1 regulates a transcriptional program associated with protein translation, protein secretion-mediated proteotoxicity and cell death during the terminal UPR. May cooperate with ATF4 transcription factor signaling to regulate ER homeostasis which is critical for cell viability. Up-regulates CASP3/caspase-3 activity in epithelial cells under ER stress. Central regulator of proteotoxicity associated with ER stress-mediated inflammatory diseases in the intestines and liver. Involved in chondrocyte hypertrophy, a process required for normal longitudinal bone growth. This Bos taurus (Bovine) protein is Transcriptional regulator QRICH1 (QRICH1).